We begin with the raw amino-acid sequence, 416 residues long: Tyrosine permease (416 aa).

The next 11 membrane-spanning stretches (helical) occupy residues 13 to 33 (GTML…PIAM), 34 to 54 (AGIW…MMLL), 86 to 106 (VVVG…YISG), 127 to 147 (LSVI…SLLV), 153 to 173 (VLII…IWHV), 192 to 212 (LPYI…HGNV), 231 to 251 (IFIG…VTMG), 260 to 280 (PIIA…GLFT), 286 to 306 (LILT…ATLG), 337 to 357 (VVCF…GLAF), and 389 to 409 (ILNL…LDVF).

Belongs to the amino acid/polyamine transporter 2 family. Mtr/TnaB/TyrP permease subfamily.

It localises to the cell inner membrane. The sequence is that of Tyrosine permease (tutB) from Enterobacter agglomerans (Erwinia herbicola).